We begin with the raw amino-acid sequence, 200 residues long: A-type ATP synthase subunit E (200 aa).

It belongs to the V-ATPase E subunit family. Has multiple subunits with at least A(3), B(3), C, D, E, F, H, I and proteolipid K(x).

It localises to the cell membrane. Functionally, component of the A-type ATP synthase that produces ATP from ADP in the presence of a proton gradient across the membrane. This is A-type ATP synthase subunit E from Methanopyrus kandleri (strain AV19 / DSM 6324 / JCM 9639 / NBRC 100938).